The sequence spans 143 residues: Hypoxic response protein 1 (143 aa).

CBS domains lie at Met-8–Pro-65 and Leu-73–Phe-131. Cysteines 14 and 39 form a disulfide. His-97 and His-122 together coordinate Zn(2+).

In terms of assembly, homodimer.

Its subcellular location is the secreted. In terms of biological role, unlike some other CBS-domain containing proteins does not seem to bind AMP. The protein is Hypoxic response protein 1 (hrp1) of Mycobacterium tuberculosis (strain CDC 1551 / Oshkosh).